Here is a 71-residue protein sequence, read N- to C-terminus: MGVGLHGDHVGGELNSANAFTETLFKMDYNNPEHKEMMDLEGLKRWIARRKSLKLPSTRANIKISDKKLPH.

Residues 1 to 21 (MGVGLHGDHVGGELNSANAFT) form the signal peptide.

This is an uncharacterized protein from Haemophilus influenzae (strain ATCC 51907 / DSM 11121 / KW20 / Rd).